Reading from the N-terminus, the 1224-residue chain is Protein MSN5 (1224 aa).

Residues 1200–1224 (NKENGDMLDDPNIEDGAVGNLFDDN) are disordered.

Interacts with CEX1.

This chain is Protein MSN5 (MSN5), found in Saccharomyces cerevisiae (strain ATCC 204508 / S288c) (Baker's yeast).